We begin with the raw amino-acid sequence, 429 residues long: Cleavage stimulation factor subunit 50 (429 aa).

Positions 20 to 41 (LNALIVAHLRHHNLSQVASAVA) are hydrophobic. 7 WD repeats span residues 121 to 160 (EHKS…QMIS), 174 to 213 (DHAE…AKRA), 218 to 257 (QDTH…CFLP), 264 to 303 (GVSG…CVRS), 308 to 347 (HGKS…MVKE), 351 to 392 (AKRV…KVAK), and 396 to 429 (NHNG…KESV).

As to quaternary structure, homodimer. Belongs to the CSTF complex. Forms a complex with cleavage and polyadenylation specificity factor (CPSF) subunits CSTF64, PABN3, CPSF30, FIPS5 and CPSF100.

Its subcellular location is the nucleus. Its function is as follows. One of the multiple factors required for polyadenylation and 3'-end cleavage of pre-mRNAs. May be responsible for the interaction of CSTF with other factors to form a stable complex on the pre-mRNA. The protein is Cleavage stimulation factor subunit 50 of Arabidopsis thaliana (Mouse-ear cress).